The chain runs to 126 residues: Large ribosomal subunit protein bL12c (126 aa).

This sequence belongs to the bacterial ribosomal protein bL12 family. As to quaternary structure, homodimer. Part of the ribosomal stalk of the 50S ribosomal subunit. Forms a multimeric L10(L12)X complex, where L10 forms an elongated spine to which 2 to 4 L12 dimers bind in a sequential fashion. Binds GTP-bound translation factors.

The protein localises to the plastid. The protein resides in the cyanelle. Its function is as follows. Forms part of the ribosomal stalk which helps the ribosome interact with GTP-bound translation factors. Is thus essential for accurate translation. The sequence is that of Large ribosomal subunit protein bL12c from Cyanophora paradoxa.